We begin with the raw amino-acid sequence, 338 residues long: RNA 3'-terminal phosphate cyclase (338 aa).

Residues Q103 and 283–287 (YLADQ) contribute to the ATP site. The Tele-AMP-histidine intermediate role is filled by H308.

The protein belongs to the RNA 3'-terminal cyclase family. Type 1 subfamily.

Its subcellular location is the cytoplasm. It carries out the reaction a 3'-end 3'-phospho-ribonucleotide-RNA + ATP = a 3'-end 2',3'-cyclophospho-ribonucleotide-RNA + AMP + diphosphate. In terms of biological role, catalyzes the conversion of 3'-phosphate to a 2',3'-cyclic phosphodiester at the end of RNA. The mechanism of action of the enzyme occurs in 3 steps: (A) adenylation of the enzyme by ATP; (B) transfer of adenylate to an RNA-N3'P to produce RNA-N3'PP5'A; (C) and attack of the adjacent 2'-hydroxyl on the 3'-phosphorus in the diester linkage to produce the cyclic end product. The biological role of this enzyme is unknown but it is likely to function in some aspects of cellular RNA processing. This Escherichia coli O17:K52:H18 (strain UMN026 / ExPEC) protein is RNA 3'-terminal phosphate cyclase.